Reading from the N-terminus, the 104-residue chain is MQLYTYLYLLVPLVTFHLILSTGTLAHGGTLTERRSTDTTALKPEPVLLQKSDARSTDDNDKDRLTQMKRILKKRGNKARGEEEHSKYQECLREIRVNKVQQEC.

A signal peptide spans Met1–Ala26. Positions His27–Arg80 are excised as a propeptide. Residues Gly29 to Lys87 form a disordered region. Residues Ser52–Thr66 show a composition bias toward basic and acidic residues. Residues Glu83, Glu84, Glu90, Glu94, and Glu103 each carry the 4-carboxyglutamate modification. The a divalent metal cation site is built by Glu90 and Glu94. Residues Cys91 and Cys104 are joined by a disulfide bond.

The protein belongs to the conotoxin B superfamily. Expressed by the venom duct.

It localises to the secreted. Its function is as follows. Conantokins inhibit N-methyl-D-aspartate (NMDA) receptors. This toxin has the highest potency for the NR2B/GRIN2B subunit, followed by NR2A/GRIN2A, NR2C/GRIN2C, and NR2D/GRIN2D subunits. This is Conantokin-P from Conus purpurascens (Purple cone).